We begin with the raw amino-acid sequence, 156 residues long: Photosystem I reaction center subunit XI (156 aa).

Helical transmembrane passes span 75-95 (GGLLSAVAMISILTIALSLYA) and 128-148 (FFIGGSGGVIFAYLLCQALYF).

The protein belongs to the PsaL family.

The protein resides in the cellular thylakoid membrane. The polypeptide is Photosystem I reaction center subunit XI (Crocosphaera subtropica (strain ATCC 51142 / BH68) (Cyanothece sp. (strain ATCC 51142))).